The following is a 291-amino-acid chain: tRNA dimethylallyltransferase (291 aa).

9 to 16 (GPTASGKT) provides a ligand contact to ATP. Substrate is bound at residue 11-16 (TASGKT). The interaction with substrate tRNA stretch occupies residues 34 to 37 (DSLQ).

This sequence belongs to the IPP transferase family. As to quaternary structure, monomer. Requires Mg(2+) as cofactor.

It catalyses the reaction adenosine(37) in tRNA + dimethylallyl diphosphate = N(6)-dimethylallyladenosine(37) in tRNA + diphosphate. Functionally, catalyzes the transfer of a dimethylallyl group onto the adenine at position 37 in tRNAs that read codons beginning with uridine, leading to the formation of N6-(dimethylallyl)adenosine (i(6)A). The protein is tRNA dimethylallyltransferase of Aster yellows witches'-broom phytoplasma (strain AYWB).